A 161-amino-acid polypeptide reads, in one-letter code: Cyclic pyranopterin monophosphate synthase (161 aa).

Substrate-binding positions include 75–77 (LCH) and 113–114 (ME). Aspartate 128 is a catalytic residue.

This sequence belongs to the MoaC family. Homohexamer; trimer of dimers.

It catalyses the reaction (8S)-3',8-cyclo-7,8-dihydroguanosine 5'-triphosphate = cyclic pyranopterin phosphate + diphosphate. Its pathway is cofactor biosynthesis; molybdopterin biosynthesis. Catalyzes the conversion of (8S)-3',8-cyclo-7,8-dihydroguanosine 5'-triphosphate to cyclic pyranopterin monophosphate (cPMP). This is Cyclic pyranopterin monophosphate synthase from Shigella sonnei (strain Ss046).